The following is a 278-amino-acid chain: Tryptophan synthase alpha chain (278 aa).

Residues E50 and D61 each act as proton acceptor in the active site.

The protein belongs to the TrpA family. As to quaternary structure, tetramer of two alpha and two beta chains.

It carries out the reaction (1S,2R)-1-C-(indol-3-yl)glycerol 3-phosphate + L-serine = D-glyceraldehyde 3-phosphate + L-tryptophan + H2O. It functions in the pathway amino-acid biosynthesis; L-tryptophan biosynthesis; L-tryptophan from chorismate: step 5/5. Functionally, the alpha subunit is responsible for the aldol cleavage of indoleglycerol phosphate to indole and glyceraldehyde 3-phosphate. The sequence is that of Tryptophan synthase alpha chain from Rhodopseudomonas palustris (strain BisB5).